Reading from the N-terminus, the 180-residue chain is Large ribosomal subunit protein uL6 (180 aa).

It belongs to the universal ribosomal protein uL6 family. As to quaternary structure, part of the 50S ribosomal subunit.

In terms of biological role, this protein binds to the 23S rRNA, and is important in its secondary structure. It is located near the subunit interface in the base of the L7/L12 stalk, and near the tRNA binding site of the peptidyltransferase center. The sequence is that of Large ribosomal subunit protein uL6 from Mycoplasma capricolum subsp. capricolum (strain California kid / ATCC 27343 / NCTC 10154).